Reading from the N-terminus, the 336-residue chain is N6-methyladenosine RNA methyltransferase MTA1 (336 aa).

The segment at 61 to 83 (LISSEPPHLPFKTPEPKAGSGGL) is disordered.

It belongs to the MT-A70-like family.

It catalyses the reaction an adenosine in mRNA + S-adenosyl-L-methionine = an N(6)-methyladenosine in mRNA + S-adenosyl-L-homocysteine + H(+). Its function is as follows. N6-methyladenosine RNA methyltransferase that plays a crucial role in fungal phenotypic traits, virulence, and stress tolerance. Mediates the methylation of mRNAs to produce N6-methyladenosine (m6A)-containing mRNAs. M6A is a modification present at internal sites of mRNAs and some non-coding RNAs and plays a role in mRNA stability and processing. Mediates specifically acid phosphatase APHA mRNA stability through a YTHDF1-dependent m6A modification of the A1306, A1341, and A1666 key methylation modification sites. Also mediates the stability of the transcription factor ZAP1 mRNA via modification of residue A1935 localized in the 3'UTR. The sequence is that of N6-methyladenosine RNA methyltransferase MTA1 from Cryphonectria parasitica (strain ATCC 38755 / EP155).